The chain runs to 794 residues: Zinc finger protein 148 (794 aa).

A Glycyl lysine isopeptide (Lys-Gly) (interchain with G-Cter in SUMO2) cross-link involves residue Lys-6. Position 51 is a phosphoserine (Ser-51). Glycyl lysine isopeptide (Lys-Gly) (interchain with G-Cter in SUMO2) cross-links involve residues Lys-88, Lys-115, and Lys-132. The C2H2-type 1 zinc finger occupies 171 to 193; the sequence is HVCEHCNAAFRTNYHLQRHVFIH. Residue Thr-194 is modified to Phosphothreonine. 2 consecutive C2H2-type zinc fingers follow at residues 199–221 and 227–249; these read FQCSQCDMRFIQKYLLQRHEKIH and FRCDECGMRFIQKYHMERHKRTH. Ser-250 carries the post-translational modification Phosphoserine. The segment at 255 to 278 adopts a C2H2-type 4 zinc-finger fold; the sequence is YQCEYCLQYFSRTDRVLKHKRMCH. Lys-291 is covalently cross-linked (Glycyl lysine isopeptide (Lys-Gly) (interchain with G-Cter in SUMO2)). The tract at residues 298-338 is disordered; sequence EEDSGFSTSPKDNSLPKKKRQKTEKKSSGMDKESSLDKSDL. Residues Ser-301 and Ser-306 each carry the phosphoserine modification. A Glycyl lysine isopeptide (Lys-Gly) (interchain with G-Cter in SUMO2) cross-link involves residue Lys-308. Residues 321–338 show a composition bias toward basic and acidic residues; the sequence is EKKSSGMDKESSLDKSDL. Residue Lys-356 forms a Glycyl lysine isopeptide (Lys-Gly) (interchain with G-Cter in SUMO1); alternate linkage. Lys-356 participates in a covalent cross-link: Glycyl lysine isopeptide (Lys-Gly) (interchain with G-Cter in SUMO2); alternate. Residue Lys-402 forms a Glycyl lysine isopeptide (Lys-Gly) (interchain with G-Cter in SUMO2) linkage. Ser-412 carries the phosphoserine modification. Glycyl lysine isopeptide (Lys-Gly) (interchain with G-Cter in SUMO2) cross-links involve residues Lys-421 and Lys-424. Residues 575 to 588 show a composition bias toward polar residues; that stretch reads SSEVPEVTQSENVG. Positions 575-596 are disordered; the sequence is SSEVPEVTQSENVGSSSQASSS. Lys-607 bears the N6-acetyllysine mark. Ser-665 and Ser-784 each carry phosphoserine. The tract at residues 775-794 is disordered; that stretch reads NDNRAGMTSSPDATTGQTFG.

Belongs to the krueppel C2H2-type zinc-finger protein family. As to quaternary structure, interacts with HNRNPDL. Interacts with the 5FMC complex; the interaction requires association with CHTOP. Interacts with CAVIN1. Sumoylated with SUMO2. Desumoylated by SENP3, resulting in the stimulation of transcription of its target genes.

Its subcellular location is the nucleus. Involved in transcriptional regulation. Represses the transcription of a number of genes including gastrin, stromelysin and enolase. Binds to the G-rich box in the enhancer region of these genes. In Bos taurus (Bovine), this protein is Zinc finger protein 148 (ZNF148).